The chain runs to 405 residues: Solute carrier family 35 member E2B (405 aa).

A disordered region spans residues 1–28 (MSSSVKTPALEELVPGSEEKPKGRSPLS). Transmembrane regions (helical) follow at residues 81–101 (LWFF…SLLG), 106–126 (MLGA…TLVP), 142–162 (FLMT…LGLV), 167–187 (VAVS…VIMS), 195–215 (TGLL…LCTA), 219–241 (SFNV…QNVF), 264–284 (AAAV…PVIG), 296–316 (VVLL…TAYA), 326–346 (FSVA…IVFG), and 347–367 (NKIT…VLLY). The disordered stretch occupies residues 380–405 (SLAAATGRAPDDTVEPLLPQDPRQHP).

Belongs to the TPT transporter family. SLC35E subfamily.

It localises to the membrane. Its function is as follows. Putative transporter. In Homo sapiens (Human), this protein is Solute carrier family 35 member E2B (SLC35E2B).